A 906-amino-acid polypeptide reads, in one-letter code: Protein translocase subunit SecA (906 aa).

Residues Q89, 107 to 111 (GEGKT), and D502 contribute to the ATP site. Zn(2+) is bound by residues C890, C892, C901, and H902.

This sequence belongs to the SecA family. As to quaternary structure, monomer and homodimer. Part of the essential Sec protein translocation apparatus which comprises SecA, SecYEG and auxiliary proteins SecDF-YajC and YidC. Zn(2+) serves as cofactor.

The protein resides in the cell inner membrane. The protein localises to the cytoplasm. It carries out the reaction ATP + H2O + cellular proteinSide 1 = ADP + phosphate + cellular proteinSide 2.. In terms of biological role, part of the Sec protein translocase complex. Interacts with the SecYEG preprotein conducting channel. Has a central role in coupling the hydrolysis of ATP to the transfer of proteins into and across the cell membrane, serving both as a receptor for the preprotein-SecB complex and as an ATP-driven molecular motor driving the stepwise translocation of polypeptide chains across the membrane. This Bartonella quintana (strain Toulouse) (Rochalimaea quintana) protein is Protein translocase subunit SecA.